The chain runs to 215 residues: Chaperone protein TorD (215 aa).

The protein belongs to the TorD/DmsD family. TorD subfamily.

It localises to the cytoplasm. Its function is as follows. Involved in the biogenesis of TorA. Acts on TorA before the insertion of the molybdenum cofactor and, as a result, probably favors a conformation of the apoenzyme that is competent for acquiring the cofactor. This chain is Chaperone protein TorD, found in Aliivibrio fischeri (strain ATCC 700601 / ES114) (Vibrio fischeri).